We begin with the raw amino-acid sequence, 162 residues long: SsrA-binding protein (162 aa).

Positions 140-162 (DKRETAAKRDWSRQKSRLMKDHG) are disordered.

It belongs to the SmpB family.

It is found in the cytoplasm. Functionally, required for rescue of stalled ribosomes mediated by trans-translation. Binds to transfer-messenger RNA (tmRNA), required for stable association of tmRNA with ribosomes. tmRNA and SmpB together mimic tRNA shape, replacing the anticodon stem-loop with SmpB. tmRNA is encoded by the ssrA gene; the 2 termini fold to resemble tRNA(Ala) and it encodes a 'tag peptide', a short internal open reading frame. During trans-translation Ala-aminoacylated tmRNA acts like a tRNA, entering the A-site of stalled ribosomes, displacing the stalled mRNA. The ribosome then switches to translate the ORF on the tmRNA; the nascent peptide is terminated with the 'tag peptide' encoded by the tmRNA and targeted for degradation. The ribosome is freed to recommence translation, which seems to be the essential function of trans-translation. The chain is SsrA-binding protein from Roseobacter denitrificans (strain ATCC 33942 / OCh 114) (Erythrobacter sp. (strain OCh 114)).